Here is a 160-residue protein sequence, read N- to C-terminus: Cytochrome b6-f complex subunit 4 (160 aa).

3 helical membrane-spanning segments follow: residues leucine 36–valine 56, leucine 95–glutamate 115, and threonine 131–isoleucine 151.

Belongs to the cytochrome b family. PetD subfamily. As to quaternary structure, the 4 large subunits of the cytochrome b6-f complex are cytochrome b6, subunit IV (17 kDa polypeptide, petD), cytochrome f and the Rieske protein, while the 4 small subunits are petG, petL, petM and petN. The complex functions as a dimer.

The protein resides in the plastid. It localises to the chloroplast thylakoid membrane. Its function is as follows. Component of the cytochrome b6-f complex, which mediates electron transfer between photosystem II (PSII) and photosystem I (PSI), cyclic electron flow around PSI, and state transitions. This Chara vulgaris (Common stonewort) protein is Cytochrome b6-f complex subunit 4.